We begin with the raw amino-acid sequence, 183 residues long: Large ribosomal subunit protein uL22 (183 aa).

The interval Lys163–Glu183 is disordered. Residues Ala165–Glu183 are compositionally biased toward basic residues.

It belongs to the universal ribosomal protein uL22 family.

This is Large ribosomal subunit protein uL22 (rpl-17) from Pectinaria gouldii (Trumpet worm).